The primary structure comprises 417 residues: Phosphoglycerate kinase 2 (417 aa).

Ser-2 is subject to N-acetylserine. 2 positions are modified to phosphoserine: Ser-2 and Ser-4. Lys-11 carries the post-translational modification N6-acetyllysine. Residues Val-23, Asp-24, Phe-25, Asn-26, Gln-38, and Arg-39 each coordinate (2R)-3-phosphoglycerate. Lys-48 carries the post-translational modification N6-acetyllysine. Residues Ser-62, His-63, Gly-65, and Arg-66 each contribute to the (2R)-3-phosphoglycerate site. Lys-75, Lys-86, and Lys-97 each carry N6-acetyllysine. The (2R)-3-phosphoglycerate site is built by Leu-122 and Arg-123. N6-acetyllysine occurs at positions 131 and 146. 2 residues coordinate (2R)-3-phosphoglycerate: His-170 and Arg-171. A Phosphotyrosine modification is found at Tyr-196. Lys-199 is subject to N6-acetyllysine. Gly-214 lines the ADP pocket. Gly-214 is a binding site for CDP. AMP is bound by residues Ala-215 and Lys-216. Residue Ala-215 coordinates ATP. Ala-215 serves as a coordination point for Mg(2+). Mg(2+) is bound by residues Ala-218 and Asp-219. Asp-219 contacts CDP. Position 220 (Lys-220) interacts with AMP. Lys-220 lines the ATP pocket. ADP is bound at residue Gly-238. CDP is bound at residue Gly-238. Position 239 (Gly-239) interacts with AMP. ATP is bound at residue Gly-239. Residues Lys-267 and Lys-291 each carry the N6-acetyllysine modification. AMP is bound at residue Gly-313. Gly-313 is an ATP binding site. The CDP site is built by Gly-338 and Phe-343. Phe-343 lines the ADP pocket. Glu-344 is an AMP binding site. ATP is bound by residues Glu-344, Asp-375, and Thr-376. Position 375 (Asp-375) interacts with Mg(2+).

This sequence belongs to the phosphoglycerate kinase family. Monomer. The cofactor is Mg(2+).

It is found in the cytoplasm. The enzyme catalyses (2R)-3-phosphoglycerate + ATP = (2R)-3-phospho-glyceroyl phosphate + ADP. It functions in the pathway carbohydrate degradation; glycolysis; pyruvate from D-glyceraldehyde 3-phosphate: step 2/5. Essential for sperm motility and male fertility but is not required for the completion of spermatogenesis. The chain is Phosphoglycerate kinase 2 (PGK2) from Macaca fascicularis (Crab-eating macaque).